The sequence spans 1279 residues: ATP-dependent helicase/nuclease subunit A (1279 aa).

The UvrD-like helicase ATP-binding domain maps to 4–499; it reads TKWTDEQRQA…VKLFKNFRSR (496 aa). 25-32 is an ATP binding site; that stretch reads AGAGAGKT. In terms of domain architecture, UvrD-like helicase C-terminal spans 526–853; it reads EEALKVGASY…RIMSIHKSKG (328 aa).

It belongs to the helicase family. AddA subfamily. In terms of assembly, heterodimer of AddA and AddB/RexB. The cofactor is Mg(2+).

The catalysed reaction is Couples ATP hydrolysis with the unwinding of duplex DNA by translocating in the 3'-5' direction.. It carries out the reaction ATP + H2O = ADP + phosphate + H(+). In terms of biological role, the heterodimer acts as both an ATP-dependent DNA helicase and an ATP-dependent, dual-direction single-stranded exonuclease. Recognizes the chi site generating a DNA molecule suitable for the initiation of homologous recombination. The AddA nuclease domain is required for chi fragment generation; this subunit has the helicase and 3' -&gt; 5' nuclease activities. In Clostridium botulinum (strain 657 / Type Ba4), this protein is ATP-dependent helicase/nuclease subunit A.